We begin with the raw amino-acid sequence, 248 residues long: MAPKAAKGAKPEPAPAPPPPGAKPEEDKKDGKEPSDKPQKAVQDHKEPSDKPQKAVQPKHEVGTRRGCRRYRWELKDSNKEFWLLGHAEIKIRSLGCLIAAMILLSSLTVHPILRLIITMEISFFSFFILLYSFAIHRYIPFILWPISDLFNDLIACAFLVGAVVFAVRSRRSMNLHYLLAVILIGAAGVFAFIDVCLQRNHFRGKKAKKHMLVPPPGKEKGPQQGKGPEPAKPPEPGKPPGPAKGKK.

A disordered region spans residues 1-63 (MAPKAAKGAK…KAVQPKHEVG (63 aa)). Over residues 12-22 (EPAPAPPPPGA) the composition is skewed to pro residues. Basic and acidic residues predominate over residues 23-63 (KPEEDKKDGKEPSDKPQKAVQDHKEPSDKPQKAVQPKHEVG). One can recognise an MARVEL domain in the interval 82–204 (FWLLGHAEIK…DVCLQRNHFR (123 aa)). 3 helical membrane-spanning segments follow: residues 116–136 (LIIT…SFAI), 147–167 (ISDL…VVFA), and 178–198 (YLLA…DVCL). Positions 208–248 (AKKHMLVPPPGKEKGPQQGKGPEPAKPPEPGKPPGPAKGKK) are disordered. A compositionally biased stretch (pro residues) spans 231 to 248 (PAKPPEPGKPPGPAKGKK).

Belongs to the chemokine-like factor family. As to expression, highly expressed in testis.

Its subcellular location is the membrane. In Homo sapiens (Human), this protein is CKLF-like MARVEL transmembrane domain-containing protein 2 (CMTM2).